The sequence spans 361 residues: Zygote arrest protein 1 (361 aa).

Disordered stretches follow at residues 1 to 23 (MFPA…AGDG), 98 to 128 (QPAG…PRSW), and 148 to 252 (VAGG…EQDK). Threonine 154 carries the phosphothreonine; by CDK1 modification. Serine 161 bears the Phosphoserine; by CDK1 mark. The segment covering 168–177 (REPEPREVAA) has biased composition (basic and acidic residues). The segment at 263–346 (KYGYYHCKDC…RQDLCGRCKD (84 aa)) adopts a 3CxxC-type zinc-finger fold.

It belongs to the ZAR1 family. Interacts with YBX2. In terms of processing, phosphorylation by CDK1 does not regulate formation of MARDO (mitochondria-associated ribonucleoprotein domain) membraneless compartment. Post-translationally, ubiquitinated and degradaded by the proteasome during oocyte meiotic maturation, leading to MARDO (mitochondria-associated ribonucleoprotein domain) membraneless compartment dissolution. In terms of tissue distribution, ovary. Expressed in primary oocytes (from primary through antral follicle stages) and during the progression from Meiosis I to Meiosis II. The mRNA is detected in growing oocytes (early primary follicle, type 3a) through fully grown oocytes (antral follicle, type 8).

Its subcellular location is the cytoplasm. It is found in the cytoplasmic ribonucleoprotein granule. In terms of biological role, mRNA-binding protein that mediates formation of MARDO (mitochondria-associated ribonucleoprotein domain), a membraneless compartment that stores maternal mRNAs in oocytes. MARDO assembly around mitochondria is directed by an increase in mitochondrial membrane potential during oocyte growth. Promotes formation of MARDO phase-separated membraneless compartment by undergoing liquid-liquid phase separation upon binding to maternal mRNAs. Binds to the 3'-UTR of maternal mRNAs. Maternal mRNAs stored in the MARDO are translationally repressed. Essential for female fertility and oocyte-to-embryo transition by coordinating maternal mRNA storage, translation and degradation. This is Zygote arrest protein 1 from Mus musculus (Mouse).